A 570-amino-acid polypeptide reads, in one-letter code: Sulfite reductase [NADPH] hemoprotein beta-component (570 aa).

Residues cysteine 434, cysteine 440, cysteine 479, and cysteine 483 each contribute to the [4Fe-4S] cluster site. A siroheme-binding site is contributed by cysteine 483.

This sequence belongs to the nitrite and sulfite reductase 4Fe-4S domain family. As to quaternary structure, alpha(8)-beta(8). The alpha component is a flavoprotein, the beta component is a hemoprotein. Siroheme is required as a cofactor. The cofactor is [4Fe-4S] cluster.

It carries out the reaction hydrogen sulfide + 3 NADP(+) + 3 H2O = sulfite + 3 NADPH + 4 H(+). The protein operates within sulfur metabolism; hydrogen sulfide biosynthesis; hydrogen sulfide from sulfite (NADPH route): step 1/1. In terms of biological role, component of the sulfite reductase complex that catalyzes the 6-electron reduction of sulfite to sulfide. This is one of several activities required for the biosynthesis of L-cysteine from sulfate. This Escherichia coli O17:K52:H18 (strain UMN026 / ExPEC) protein is Sulfite reductase [NADPH] hemoprotein beta-component.